Consider the following 268-residue polypeptide: Shikimate dehydrogenase (NADP(+)) (268 aa).

Shikimate is bound by residues Ser-13–Ser-15 and Thr-60. Lys-64 functions as the Proton acceptor in the catalytic mechanism. Asp-76 lines the NADP(+) pocket. Residues Asn-85 and Asp-100 each contribute to the shikimate site. NADP(+) contacts are provided by residues Gly-124–Ala-128, Asn-148–Arg-153, and Ile-209. Residue Tyr-211 participates in shikimate binding. Gly-232 contacts NADP(+).

It belongs to the shikimate dehydrogenase family. Homodimer.

The enzyme catalyses shikimate + NADP(+) = 3-dehydroshikimate + NADPH + H(+). The protein operates within metabolic intermediate biosynthesis; chorismate biosynthesis; chorismate from D-erythrose 4-phosphate and phosphoenolpyruvate: step 4/7. Functionally, involved in the biosynthesis of the chorismate, which leads to the biosynthesis of aromatic amino acids. Catalyzes the reversible NADPH linked reduction of 3-dehydroshikimate (DHSA) to yield shikimate (SA). This chain is Shikimate dehydrogenase (NADP(+)), found in Staphylococcus haemolyticus (strain JCSC1435).